A 156-amino-acid polypeptide reads, in one-letter code: Small ribosomal subunit protein uS7 (156 aa).

It belongs to the universal ribosomal protein uS7 family. In terms of assembly, part of the 30S ribosomal subunit. Contacts proteins S9 and S11.

In terms of biological role, one of the primary rRNA binding proteins, it binds directly to 16S rRNA where it nucleates assembly of the head domain of the 30S subunit. Is located at the subunit interface close to the decoding center, probably blocks exit of the E-site tRNA. This is Small ribosomal subunit protein uS7 from Glaesserella parasuis serovar 5 (strain SH0165) (Haemophilus parasuis).